Here is a 423-residue protein sequence, read N- to C-terminus: Serine--tRNA ligase (423 aa).

L-serine is bound at residue 231 to 233 (TAE). Residue 262–264 (RSE) coordinates ATP. E285 contacts L-serine. ATP is bound at residue 349 to 352 (EISS). Position 384 (S384) interacts with L-serine.

Belongs to the class-II aminoacyl-tRNA synthetase family. Type-1 seryl-tRNA synthetase subfamily. Homodimer. The tRNA molecule binds across the dimer.

Its subcellular location is the cytoplasm. The catalysed reaction is tRNA(Ser) + L-serine + ATP = L-seryl-tRNA(Ser) + AMP + diphosphate + H(+). It catalyses the reaction tRNA(Sec) + L-serine + ATP = L-seryl-tRNA(Sec) + AMP + diphosphate + H(+). It participates in aminoacyl-tRNA biosynthesis; selenocysteinyl-tRNA(Sec) biosynthesis; L-seryl-tRNA(Sec) from L-serine and tRNA(Sec): step 1/1. Functionally, catalyzes the attachment of serine to tRNA(Ser). Is also able to aminoacylate tRNA(Sec) with serine, to form the misacylated tRNA L-seryl-tRNA(Sec), which will be further converted into selenocysteinyl-tRNA(Sec). The sequence is that of Serine--tRNA ligase from Lactococcus lactis subsp. cremoris (strain SK11).